Reading from the N-terminus, the 65-residue chain is MNSTIWLALALVLVLEGLGPMLYPKAWKKMISAMTNLPDNILRRFGGGLVVAGVVVYYMLRKTIG.

2 consecutive transmembrane segments (helical) span residues 4–24 (TIWL…MLYP) and 45–65 (FGGG…KTIG).

It is found in the cell membrane. This is an uncharacterized protein from Escherichia coli O157:H7.